Here is a 336-residue protein sequence, read N- to C-terminus: F-box protein At5g50450 (336 aa).

The 52-residue stretch at 19–70 (NNHFEDLHDDLIISILRKLATSASSPSDFLTVLSTCKRLNRLGLHPLVLSKA) folds into the F-box domain. Zn(2+)-binding residues include H263, C266, C279, C282, C288, C292, H301, and C305. The MYND-type; atypical zinc-finger motif lies at 263–305 (HGGCGRPETRAHEFRRCSVCGKVNYCSRGCQALDWRAKHKVEC).

The sequence is that of F-box protein At5g50450 from Arabidopsis thaliana (Mouse-ear cress).